The primary structure comprises 450 residues: Divalent metal cation transporter MntH (450 aa).

Helical transmembrane passes span 34–54 (LSFL…GNWI), 61–81 (AQYG…AMLL), 108–128 (IAII…IAEV), 141–161 (IPLI…LFIM), 170–190 (AIVG…VYIS), 212–232 (GILY…NLYL), 263–283 (IQLS…ASLF), 305–325 (PVLG…ALLA), 361–381 (SLAV…AAKI), 383–403 (QLLV…LIPL), and 422–442 (VNII…YLIV).

It belongs to the NRAMP family.

It localises to the cell membrane. H(+)-stimulated, divalent metal cation uptake system. This Staphylococcus aureus (strain Mu3 / ATCC 700698) protein is Divalent metal cation transporter MntH.